The following is a 237-amino-acid chain: Mitochondrial carrier-like protein L276 (237 aa).

Solcar repeat units lie at residues 1–83, 85–161, and 164–233; these read MAKY…FENK, YPYT…LNEY, and KPVV…LNKK. The next 5 membrane-spanning stretches (helical) occupy residues 11 to 27, 60 to 76, 91 to 108, 140 to 160, and 166 to 183; these read AIAT…ICTF, VPAI…KYFL, MING…THPI, SFGK…TLNE, and VVSS…MQPL. Positions 191–196 match the Substrate recognition motif; sequence IYGLSL. Residues 205–226 form a helical membrane-spanning segment; it reads YYRGLSLNLMRIVPHFVITMTT.

This sequence belongs to the mitochondrial carrier (TC 2.A.29) family.

The protein localises to the host mitochondrion inner membrane. Transports dATP and to a lesser extent dTTP, TTP, UTP and ADP, possibly across the mitochondrial inner membrane. The sequence is that of Mitochondrial carrier-like protein L276 from Acanthamoeba polyphaga (Amoeba).